Reading from the N-terminus, the 1047-residue chain is Protein masquerade (1047 aa).

The signal sequence occupies residues 1-30 (MPRHSSTMSRLVLPLIFSILLVSKPSPSQA). Residues 54–87 (KDCPGVCVHTLATLICYEVLDDVACPSPSMKCCI) are CLIP 1. 3 disulfides stabilise this stretch: C56–C85, C60–C78, and C69–C86. N95 is a glycosylation site (N-linked (GlcNAc...) asparagine). Composition is skewed to low complexity over residues 98-139 (AVRA…STTP) and 148-175 (KRPA…VATA). The interval 98–189 (AVRATTTPKT…KEEATKADDA (92 aa)) is disordered. A compositionally biased stretch (basic and acidic residues) spans 176-189 (KPKDKEEATKADDA). Residues 192-224 (DCTGVCVADRIAEYCEAYLTSDGLCKEGTKCCV) are CLIP 2. 3 cysteine pairs are disulfide-bonded: C193-C222, C197-C216, and C206-C223. Residue N251 is glycosylated (N-linked (GlcNAc...) asparagine). The interval 252-335 (QTLSEKSAPA…PLSNKLKSGQ (84 aa)) is disordered. A compositionally biased stretch (low complexity) spans 263–280 (SSSTSTTSTTTTTSTTTT). N-linked (GlcNAc...) asparagine glycosylation occurs at N287. Residues 307–325 (AAEEEEEQETEEDGEEEEP) are compositionally biased toward acidic residues. The interval 343–374 (ECEGECMNGIFAIFCDDIDSDAFCPGEESCCV) is CLIP 3. Disulfide bonds link C344-C372, C348-C366, and C357-C373. The tract at residues 376–428 (GGASEATPSSKAPPTKPAIKHAPKPAAKPARPASPPPAPPSSTSGGGGGGDFL) is disordered. The segment at 457-492 (RCPGFCLLNIMAAFCERPSVLVSTPTTCAKGSVCCD) is CLIP 4. Disulfide bonds link C458-C490, C462-C484, and C471-C491. The segment at 498-527 (APKPKLPPPTPSPTASPTAPPYVLPNTPSP) is disordered. Residues 501-527 (PKLPPPTPSPTASPTAPPYVLPNTPSP) show a composition bias toward pro residues. Residues 532 to 567 (ECPGSCIVSLLSFTCFKNAEMTDLFRCKRSGQICCA) are CLIP 5. 3 disulfide bridges follow: C533/C565, C537/C558, and C546/C566. An N-linked (GlcNAc...) asparagine glycan is attached at N582. The disordered stretch occupies residues 583–673 (DTAYYPAPPP…TTTTTTTTPR (91 aa)). Pro residues-rich tracts occupy residues 588–606 (PAPP…PQTP), 613–638 (NPPP…PPAP), and 650–661 (GLPPQPQPPMTT). Residues 662-672 (PPTTTTTTTTP) are compositionally biased toward low complexity. Intrachain disulfides connect C682–C916, C829–C845, C930–C1001, C961–C981, and C991–C1019. Residues N726 and N794 are each glycosylated (N-linked (GlcNAc...) asparagine). The interval 803 to 1043 (VVGGEDGENG…FIGWINQIIS (241 aa)) is peptidase S1.

This sequence belongs to the peptidase S1 family. CLIP subfamily. Proteolytically cleaved and thereafter secreted.

Its subcellular location is the secreted. The protein localises to the cell projection. It localises to the axon. Its function is as follows. In embryogenesis, has a role in somatic muscle attachment and in the development of axonal pathways probably by stabilizing cell-matrix adhesion and/or by acting as a competitive antagonist of serine proteases. The polypeptide is Protein masquerade (Drosophila melanogaster (Fruit fly)).